A 487-amino-acid polypeptide reads, in one-letter code: Serine/threonine-protein kinase BSK8 (487 aa).

Gly-2 carries the N-myristoyl glycine lipid modification. Ser-20 is modified (phosphoserine). The 267-residue stretch at 59-325 (ENIVSEHGER…DLEIASHQLL (267 aa)) folds into the Protein kinase domain. ATP contacts are provided by residues 65-73 (HGERAPNVV), Asn-71, Lys-87, and 133-135 (EFM). Asp-181 functions as the Proton acceptor in the catalytic mechanism. ATP contacts are provided by residues 185–186 (YR) and Asn-205. A Phosphoserine modification is found at Ser-213.

This sequence belongs to the protein kinase superfamily. Ser/Thr protein kinase family. In terms of assembly, interacts with ASK7/BIN2, BSK1, BSK5, BSK6 and BSK11. Interacts with BSL2. Post-translationally, phosphorylated by BRI1, ASK7/BIN2 and ASK9/BIL2.

Its subcellular location is the cell membrane. The enzyme catalyses L-seryl-[protein] + ATP = O-phospho-L-seryl-[protein] + ADP + H(+). It catalyses the reaction L-threonyl-[protein] + ATP = O-phospho-L-threonyl-[protein] + ADP + H(+). In terms of biological role, probable serine/threonine kinase that acts as a positive regulator of brassinosteroid (BR) signaling downstream of the receptor kinase BRI1. Functions redundantly with BSK3, BSK4, BSK6 and BSK7. Involved in the regulation of sucrose-phosphate synthase 1 (SPS1) in the context of sucrose resuply after starvation. Activates BSL2, a phosphatase that may dephosphorylate SPS1, leading to the activation of SPS1. This chain is Serine/threonine-protein kinase BSK8, found in Arabidopsis thaliana (Mouse-ear cress).